We begin with the raw amino-acid sequence, 132 residues long: Probable histone H2A.2 (132 aa).

Belongs to the histone H2A family. In terms of assembly, the nucleosome is a histone octamer containing two molecules each of H2A, H2B, H3 and H4 assembled in one H3-H4 heterotetramer and two H2A-H2B heterodimers. The octamer wraps approximately 147 bp of DNA. Not ubiquitinated. As to expression, expressed mainly in non-dividing tissues of the plant. Also found in meristems and dividing cells.

It localises to the nucleus. The protein localises to the chromosome. Its function is as follows. Core component of nucleosome. Nucleosomes wrap and compact DNA into chromatin, limiting DNA accessibility to the cellular machineries which require DNA as a template. Histones thereby play a central role in transcription regulation, DNA repair, DNA replication and chromosomal stability. DNA accessibility is regulated via a complex set of post-translational modifications of histones, also called histone code, and nucleosome remodeling. The polypeptide is Probable histone H2A.2 (Arabidopsis thaliana (Mouse-ear cress)).